Consider the following 991-residue polypeptide: Translation initiation factor IF-2 (991 aa).

2 disordered regions span residues Gln-126–Glu-220 and Val-325–Lys-359. Polar residues-rich tracts occupy residues Gln-138–Ala-160 and Pro-201–Gln-210. A compositionally biased stretch (low complexity) spans Lys-326–Ala-340. Residues Gly-343–Lys-353 show a composition bias toward basic residues. Residues Ile-488–Lys-658 form the tr-type G domain. Residues Gly-497–Thr-504 are G1. A GTP-binding site is contributed by Gly-497–Thr-504. The segment at Gly-522 to His-526 is G2. The segment at Asp-544 to Gly-547 is G3. Residues Asp-544–His-548 and Asn-598–Asp-601 each bind GTP. The tract at residues Asn-598–Asp-601 is G4. The segment at Ser-634 to Lys-636 is G5.

This sequence belongs to the TRAFAC class translation factor GTPase superfamily. Classic translation factor GTPase family. IF-2 subfamily.

The protein resides in the cytoplasm. In terms of biological role, one of the essential components for the initiation of protein synthesis. Protects formylmethionyl-tRNA from spontaneous hydrolysis and promotes its binding to the 30S ribosomal subunits. Also involved in the hydrolysis of GTP during the formation of the 70S ribosomal complex. The protein is Translation initiation factor IF-2 of Chlorobium phaeobacteroides (strain DSM 266 / SMG 266 / 2430).